The primary structure comprises 269 residues: UPF0328 protein ECU03_0020 (269 aa).

It belongs to the UPF0328 family.

In Encephalitozoon cuniculi (strain GB-M1) (Microsporidian parasite), this protein is UPF0328 protein ECU03_0020.